We begin with the raw amino-acid sequence, 193 residues long: Holliday junction branch migration complex subunit RuvA (193 aa).

The domain I stretch occupies residues 1–64 (MIGRIAGILL…EDAHLLYGFL (64 aa)). Residues 65-139 (TPQERTTFRE…GKLGADLGAL (75 aa)) form a domain II region. Positions 139–143 (LAGAA) are flexible linker. Residues 144–193 (SPSDHAADILNALVALGYSEKEGLAAIKNVPAGTGVSDGIKLALKALSKA) are domain III.

It belongs to the RuvA family. As to quaternary structure, homotetramer. Forms an RuvA(8)-RuvB(12)-Holliday junction (HJ) complex. HJ DNA is sandwiched between 2 RuvA tetramers; dsDNA enters through RuvA and exits via RuvB. An RuvB hexamer assembles on each DNA strand where it exits the tetramer. Each RuvB hexamer is contacted by two RuvA subunits (via domain III) on 2 adjacent RuvB subunits; this complex drives branch migration. In the full resolvosome a probable DNA-RuvA(4)-RuvB(12)-RuvC(2) complex forms which resolves the HJ.

Its subcellular location is the cytoplasm. Functionally, the RuvA-RuvB-RuvC complex processes Holliday junction (HJ) DNA during genetic recombination and DNA repair, while the RuvA-RuvB complex plays an important role in the rescue of blocked DNA replication forks via replication fork reversal (RFR). RuvA specifically binds to HJ cruciform DNA, conferring on it an open structure. The RuvB hexamer acts as an ATP-dependent pump, pulling dsDNA into and through the RuvAB complex. HJ branch migration allows RuvC to scan DNA until it finds its consensus sequence, where it cleaves and resolves the cruciform DNA. The sequence is that of Holliday junction branch migration complex subunit RuvA from Burkholderia vietnamiensis (strain G4 / LMG 22486) (Burkholderia cepacia (strain R1808)).